The sequence spans 694 residues: Probable metal-nicotianamine transporter YSL8 (694 aa).

A run of 14 helical transmembrane segments spans residues 38–58, 62–82, 110–130, 154–174, 215–235, 265–285, 319–339, 393–413, 421–441, 467–487, 506–526, 567–587, 608–628, and 643–663; these read ITVRSLVVSAVLGTFLSFIVM, LTSGIVPSLNVSAGLLAFFLM, CVISCSSIAFSGGFGTYILGM, LGRLIAFLFLVSFVGLFSIVP, ILFKSFVGSFLWSLFQWFYAA, VGVGMICPYIINFSLLIGSVV, VFISIAMIVGDGLFNFFSIVL, IAAAAYVLLAAISVVAIPHIF, VVWAYVVAPLFAFCNAYGTGL, GGVVAGLAACGLMMGIVSTAS, MFVSQVLGTGMGCIISPMVFW, LRFCLAFFLLAIAICALKEVA, FFLGSFFTIDMCVGSLVLFLW, and VASGLICGDGIWSLPSSILSL.

The protein belongs to the YSL (TC 2.A.67.2) family. As to expression, expressed in root epidermis and exoderm.

The protein resides in the membrane. Its function is as follows. May be involved in the transport of nicotianamine-chelated metals. This Oryza sativa subsp. japonica (Rice) protein is Probable metal-nicotianamine transporter YSL8 (YSL8).